Here is a 66-residue protein sequence, read N- to C-terminus: Antimicrobial peptide Eval967 (66 aa).

A signal peptide spans 1-22 (MKFSALLPVFFLLLAVIDYCQA). At Leu36 the chain carries Leucine amide. The propeptide occupies 37–66 (GKRDVKTQKYVDIKRRDLDLDDMLSKLFED).

This sequence belongs to the non-disulfide-bridged peptide (NDBP) superfamily. Short antimicrobial peptide (group 4) family. In terms of tissue distribution, expressed by the venom gland.

The protein localises to the secreted. Its function is as follows. Probable antimicrobial peptide. Has no inhibitory activity against herpes simplex virus type 1 (HSV-1). In Euscorpiops validus (Scorpion), this protein is Antimicrobial peptide Eval967.